Consider the following 684-residue polypeptide: Probable Xaa-Pro aminopeptidase P (684 aa).

Residues Asp-481, Asp-492, Glu-590, and Glu-604 each coordinate Mn(2+).

Belongs to the peptidase M24B family. It depends on Mn(2+) as a cofactor.

The catalysed reaction is Release of any N-terminal amino acid, including proline, that is linked to proline, even from a dipeptide or tripeptide.. Functionally, catalyzes the removal of a penultimate prolyl residue from the N-termini of peptides. The chain is Probable Xaa-Pro aminopeptidase P (ampp) from Neurospora crassa (strain ATCC 24698 / 74-OR23-1A / CBS 708.71 / DSM 1257 / FGSC 987).